A 125-amino-acid polypeptide reads, in one-letter code: Holo-[acyl-carrier-protein] synthase (125 aa).

Residues D8 and E57 each coordinate Mg(2+).

This sequence belongs to the P-Pant transferase superfamily. AcpS family. Mg(2+) serves as cofactor.

The protein localises to the cytoplasm. The catalysed reaction is apo-[ACP] + CoA = holo-[ACP] + adenosine 3',5'-bisphosphate + H(+). In terms of biological role, transfers the 4'-phosphopantetheine moiety from coenzyme A to a Ser of acyl-carrier-protein. This chain is Holo-[acyl-carrier-protein] synthase, found in Nitrosomonas europaea (strain ATCC 19718 / CIP 103999 / KCTC 2705 / NBRC 14298).